A 72-amino-acid polypeptide reads, in one-letter code: Translation initiation factor IF-1 (72 aa).

One can recognise an S1-like domain in the interval 1-72 (MAKEDTIQMQ…TRARIVFRAR (72 aa)).

It belongs to the IF-1 family. Component of the 30S ribosomal translation pre-initiation complex which assembles on the 30S ribosome in the order IF-2 and IF-3, IF-1 and N-formylmethionyl-tRNA(fMet); mRNA recruitment can occur at any time during PIC assembly.

It is found in the cytoplasm. Its function is as follows. One of the essential components for the initiation of protein synthesis. Stabilizes the binding of IF-2 and IF-3 on the 30S subunit to which N-formylmethionyl-tRNA(fMet) subsequently binds. Helps modulate mRNA selection, yielding the 30S pre-initiation complex (PIC). Upon addition of the 50S ribosomal subunit IF-1, IF-2 and IF-3 are released leaving the mature 70S translation initiation complex. The sequence is that of Translation initiation factor IF-1 from Neisseria gonorrhoeae (strain ATCC 700825 / FA 1090).